The following is a 203-amino-acid chain: dITP/XTP pyrophosphatase (203 aa).

8 to 13 (SNNAGK) serves as a coordination point for substrate. Positions 40 and 69 each coordinate Mg(2+). The Proton acceptor role is filled by D69. Residues S70, 152-155 (FGYD), K175, and 180-181 (HR) contribute to the substrate site.

Belongs to the HAM1 NTPase family. As to quaternary structure, homodimer. It depends on Mg(2+) as a cofactor.

It catalyses the reaction XTP + H2O = XMP + diphosphate + H(+). It carries out the reaction dITP + H2O = dIMP + diphosphate + H(+). The catalysed reaction is ITP + H2O = IMP + diphosphate + H(+). In terms of biological role, pyrophosphatase that catalyzes the hydrolysis of nucleoside triphosphates to their monophosphate derivatives, with a high preference for the non-canonical purine nucleotides XTP (xanthosine triphosphate), dITP (deoxyinosine triphosphate) and ITP. Seems to function as a house-cleaning enzyme that removes non-canonical purine nucleotides from the nucleotide pool, thus preventing their incorporation into DNA/RNA and avoiding chromosomal lesions. The sequence is that of dITP/XTP pyrophosphatase from Nitrosomonas europaea (strain ATCC 19718 / CIP 103999 / KCTC 2705 / NBRC 14298).